The sequence spans 309 residues: Ornithine carbamoyltransferase (309 aa).

Residues 51-54 (STRT), Q78, R102, and 129-132 (HPVQ) each bind carbamoyl phosphate. L-ornithine-binding positions include N159, D223, and 227–228 (SM). Residues 263–264 (CL) and R291 contribute to the carbamoyl phosphate site.

The protein belongs to the aspartate/ornithine carbamoyltransferase superfamily. OTCase family.

The protein localises to the cytoplasm. It catalyses the reaction carbamoyl phosphate + L-ornithine = L-citrulline + phosphate + H(+). It functions in the pathway amino-acid biosynthesis; L-arginine biosynthesis; L-arginine from L-ornithine and carbamoyl phosphate: step 1/3. Its function is as follows. Reversibly catalyzes the transfer of the carbamoyl group from carbamoyl phosphate (CP) to the N(epsilon) atom of ornithine (ORN) to produce L-citrulline. In Nitratiruptor sp. (strain SB155-2), this protein is Ornithine carbamoyltransferase.